The following is a 334-amino-acid chain: UPF0104 membrane protein MTH_378 (334 aa).

A run of 8 helical transmembrane segments spans residues 7 to 27 (FYFFALSILLILALIIWMGPS), 33 to 53 (VYMADWMIIAIALLIHMGVLA), 120 to 140 (FFDLGIGGGLLLLAAVMVPVI), 142 to 162 (VIALFGAILSVLITYLIYLVN), 218 to 238 (VIFILSLLSWLMECLRLYLVF), 247 to 267 (FSAVIIIFLLANLVGILSALP), 277 to 297 (MAGLFVVFGVPGFLAGSIALV), and 300 to 320 (IISFWMVTALGAIFSSCYAGE).

It belongs to the UPF0104 family.

The protein resides in the cell membrane. The polypeptide is UPF0104 membrane protein MTH_378 (Methanothermobacter thermautotrophicus (strain ATCC 29096 / DSM 1053 / JCM 10044 / NBRC 100330 / Delta H) (Methanobacterium thermoautotrophicum)).